Here is a 1597-residue protein sequence, read N- to C-terminus: Protein STU1 (1597 aa).

Disordered stretches follow at residues 220 to 265 (GNSS…PSSS), 519 to 958 (DKVN…RPIH), 1005 to 1154 (DAEA…ELNT), and 1307 to 1332 (SQRP…SSLV). The span at 535–552 (APRESLKEVMRRSRESSV) shows a compositional bias: basic and acidic residues. Over residues 577 to 605 (SSGLVGRSLSGSNLTDRSNRLSSTSTSSR) the composition is skewed to low complexity. Polar residues-rich tracts occupy residues 610-622 (AVSD…QMTR) and 632-645 (PSLT…SLTR). 2 stretches are compositionally biased toward basic and acidic residues: residues 660–673 (GSRE…DQNR) and 694–708 (ESSR…DPSR). The span at 709–726 (ESSLAPSVHSSTAISRES) shows a compositional bias: polar residues. The segment covering 765 to 781 (EETMNEVTTAEATATTA) has biased composition (low complexity). 2 stretches are compositionally biased toward polar residues: residues 791–801 (PRESTPPNSSP) and 808–822 (PATQ…TGKS). Over residues 832–846 (ELSRDLNGESKHLKE) the composition is skewed to basic and acidic residues. Composition is skewed to polar residues over residues 918-933 (DSQS…QSEP), 1013-1025 (TEQT…SDTA), and 1036-1045 (NSEQGPSTEP). A compositionally biased stretch (basic and acidic residues) spans 1081 to 1091 (ASDEIETDHTK). Residues 1108 to 1119 (EPMEICDSDNDA) are compositionally biased toward acidic residues. The span at 1122-1139 (NGTNPDTKCQDQQDSTTP) shows a compositional bias: polar residues. The stretch at 1537-1573 (PSYETQLLALITELISDPDPLVRRVTVGLVVRVLRVS) is one HEAT repeat.

Belongs to the CLASP family. Interacts with microtubules.

The protein localises to the cytoplasm. It is found in the cytoskeleton. The protein resides in the nucleus. Its subcellular location is the spindle. Microtubule binding protein that promotes the stabilization of dynamic microtubules. Required for mitotic spindle formation. The chain is Protein STU1 (STU1) from Yarrowia lipolytica (strain CLIB 122 / E 150) (Yeast).